Consider the following 760-residue polypeptide: Prolyl endopeptidase FAP (760 aa).

Over 1-4 (MKTW) the chain is Cytoplasmic. The chain crosses the membrane as a helical; Signal-anchor for type II membrane protein span at residues 5–25 (LKIVFGVATSAVLALLVMCIV). At 26–760 (LRPSRVHNSE…FLKQCFSLSD (735 aa)) the chain is on the extracellular side. 3 N-linked (GlcNAc...) asparagine glycosylation sites follow: asparagine 49, asparagine 92, and asparagine 99. Residues glutamate 203 and glutamate 204 each contribute to the substrate site. 2 N-linked (GlcNAc...) asparagine glycosylation sites follow: asparagine 227 and asparagine 314. Disulfide bonds link cysteine 321–cysteine 332, cysteine 438–cysteine 441, and cysteine 448–cysteine 466. The stretch at 481–512 (TDQEIKILEDNKELENALKNIQLPKEEIKKLK) forms a coiled coil. Catalysis depends on serine 624, which acts as the Charge relay system. An intrachain disulfide couples cysteine 643 to cysteine 755. An N-linked (GlcNAc...) asparagine glycan is attached at asparagine 679. Active-site charge relay system residues include aspartate 702 and histidine 734.

The protein belongs to the peptidase S9B family. As to quaternary structure, homodimer; homodimerization is required for activity of both plasma membrane and soluble forms. The monomer is inactive. Heterodimer with DPP4. Interacts with PLAUR; the interaction occurs at the cell surface of invadopodia membranes. Interacts with ITGB1. Interacts with ITGA3. Associates with integrin alpha-3/beta-1; the association occurs in a collagen-dependent manner at the cell surface of invadopodia membranes. Post-translationally, N-glycosylated. The N-terminus may be blocked.

The protein resides in the cell surface. It is found in the cell membrane. It localises to the cell projection. The protein localises to the lamellipodium membrane. Its subcellular location is the invadopodium membrane. The protein resides in the ruffle membrane. It is found in the membrane. It localises to the secreted. The catalysed reaction is Release of an N-terminal dipeptide, Xaa-Yaa-|-Zaa-, from a polypeptide, preferentially when Yaa is Pro, provided Zaa is neither Pro nor hydroxyproline.. The enzyme catalyses Hydrolysis of Pro-|-Xaa &gt;&gt; Ala-|-Xaa in oligopeptides.. With respect to regulation, gelatinase activity is inhibited by serine-protease inhibitors, such as phenylmethylsulfonyl fluoride (PMSF), 4-(2-aminoethyl)-benzenesulfonyl fluoride hydrochloride (AEBSF), 4-amidino phenylsulfonyl fluoride (APSF) and diisopropyl fluorophosphate (DFP), N-ethylmaleimide (NEM) and phenylmethylsulfonyl fluoride (PMSF). Dipeptidyl peptidase activity is inhibited by 2,2'-azino-bis(3-ethylbenzthiazoline-6-sulfonic acid), diisopropylfluorophosphate (DFP). Prolyl endopeptidase activity is inhibited by the boronic acid peptide Ac-Gly-BoroPro, Ac-Gly-Pro-chloromethyl ketone and Thr-Ser-Gly-chloromethyl ketone. Cell surface glycoprotein serine protease that participates in extracellular matrix degradation and involved in many cellular processes including tissue remodeling, fibrosis, wound healing, inflammation and tumor growth. Both plasma membrane and soluble forms exhibit post-proline cleaving endopeptidase activity, with a marked preference for Ala/Ser-Gly-Pro-Ser/Asn/Ala consensus sequences, on substrate such as alpha-2-antiplasmin SERPINF2 and SPRY2. Degrade also gelatin, heat-denatured type I collagen, but not native collagen type I and IV, vibronectin, tenascin, laminin, fibronectin, fibrin or casein. Also has dipeptidyl peptidase activity, exhibiting the ability to hydrolyze the prolyl bond two residues from the N-terminus of synthetic dipeptide substrates provided that the penultimate residue is proline, with a preference for Ala-Pro, Ile-Pro, Gly-Pro, Arg-Pro and Pro-Pro. Natural neuropeptide hormones for dipeptidyl peptidase are the neuropeptide Y (NPY), peptide YY (PYY), substance P (TAC1) and brain natriuretic peptide 32 (NPPB). The plasma membrane form, in association with either DPP4, PLAUR or integrins, is involved in the pericellular proteolysis of the extracellular matrix (ECM), and hence promotes cell adhesion, migration and invasion through the ECM. Plays a role in tissue remodeling during development and wound healing. Participates in the cell invasiveness towards the ECM in malignant melanoma cancers. Enhances tumor growth progression by increasing angiogenesis, collagen fiber degradation and apoptosis and by reducing antitumor response of the immune system. Promotes glioma cell invasion through the brain parenchyma by degrading the proteoglycan brevican. Acts as a tumor suppressor in melanocytic cells through regulation of cell proliferation and survival in a serine protease activity-independent manner. The sequence is that of Prolyl endopeptidase FAP from Bos taurus (Bovine).